A 544-amino-acid polypeptide reads, in one-letter code: Phosphomannomutase (544 aa).

The active-site Phosphoserine intermediate is Ser145. Ser145, Asp297, Asp299, and Asp301 together coordinate Mg(2+).

Belongs to the phosphohexose mutase family. Requires Mg(2+) as cofactor.

It carries out the reaction alpha-D-mannose 1-phosphate = D-mannose 6-phosphate. The protein is Phosphomannomutase (manB) of Mycoplasmoides pirum (Mycoplasma pirum).